The chain runs to 220 residues: Small ribosomal subunit protein eS1 (220 aa).

This sequence belongs to the eukaryotic ribosomal protein eS1 family.

The sequence is that of Small ribosomal subunit protein eS1 from Pyrobaculum arsenaticum (strain DSM 13514 / JCM 11321 / PZ6).